The following is a 342-amino-acid chain: Large ribosomal subunit protein uL3 (342 aa).

The protein belongs to the universal ribosomal protein uL3 family. In terms of assembly, part of the 50S ribosomal subunit. Forms a cluster with proteins L14 and L24e.

One of the primary rRNA binding proteins, it binds directly near the 3'-end of the 23S rRNA, where it nucleates assembly of the 50S subunit. The chain is Large ribosomal subunit protein uL3 from Pyrobaculum islandicum (strain DSM 4184 / JCM 9189 / GEO3).